Consider the following 360-residue polypeptide: Serine/threonine-protein phosphatase 2A activator 2 (360 aa).

The protein belongs to the PTPA-type PPIase family.

The protein localises to the cytoplasm. The catalysed reaction is [protein]-peptidylproline (omega=180) = [protein]-peptidylproline (omega=0). Its function is as follows. PPIases accelerate the folding of proteins. It catalyzes the cis-trans isomerization of proline imidic peptide bonds in oligopeptides. Acts as a regulatory subunit for PP2A-like phosphatases modulating their activity or substrate specificity, probably by inducing a conformational change in the catalytic subunit, a direct target of the PPIase. Can reactivate inactive phosphatase PP2A-phosphatase methylesterase complexes (PP2Ai) in presence of ATP and Mg(2+) by dissociating the inactive form from the complex. The sequence is that of Serine/threonine-protein phosphatase 2A activator 2 (RRD2) from Kluyveromyces lactis (strain ATCC 8585 / CBS 2359 / DSM 70799 / NBRC 1267 / NRRL Y-1140 / WM37) (Yeast).